A 387-amino-acid polypeptide reads, in one-letter code: Succinate--CoA ligase [ADP-forming] subunit beta (387 aa).

One can recognise an ATP-grasp domain in the interval 9 to 244 (KRLLAEEGVP…STQQDGREIT (236 aa)). ATP contacts are provided by residues Lys-46, 53–55 (GRG), Glu-99, Ser-102, and Glu-107. Residues Asn-199 and Asp-213 each contribute to the Mg(2+) site. Substrate is bound by residues Asn-264 and 321-323 (GIT).

Belongs to the succinate/malate CoA ligase beta subunit family. Heterotetramer of two alpha and two beta subunits. Mg(2+) serves as cofactor.

It catalyses the reaction succinate + ATP + CoA = succinyl-CoA + ADP + phosphate. The catalysed reaction is GTP + succinate + CoA = succinyl-CoA + GDP + phosphate. It participates in carbohydrate metabolism; tricarboxylic acid cycle; succinate from succinyl-CoA (ligase route): step 1/1. In terms of biological role, succinyl-CoA synthetase functions in the citric acid cycle (TCA), coupling the hydrolysis of succinyl-CoA to the synthesis of either ATP or GTP and thus represents the only step of substrate-level phosphorylation in the TCA. The beta subunit provides nucleotide specificity of the enzyme and binds the substrate succinate, while the binding sites for coenzyme A and phosphate are found in the alpha subunit. In Acidithiobacillus ferrooxidans (strain ATCC 23270 / DSM 14882 / CIP 104768 / NCIMB 8455) (Ferrobacillus ferrooxidans (strain ATCC 23270)), this protein is Succinate--CoA ligase [ADP-forming] subunit beta.